The chain runs to 214 residues: Ribonuclease HII (214 aa).

In terms of domain architecture, RNase H type-2 spans 26-214 (EIVCGVDEAG…PVRAALDLIR (189 aa)). A divalent metal cation-binding residues include Asp32, Glu33, and Asp124.

Belongs to the RNase HII family. Mn(2+) is required as a cofactor. The cofactor is Mg(2+).

The protein localises to the cytoplasm. The enzyme catalyses Endonucleolytic cleavage to 5'-phosphomonoester.. Its function is as follows. Endonuclease that specifically degrades the RNA of RNA-DNA hybrids. This chain is Ribonuclease HII, found in Burkholderia lata (strain ATCC 17760 / DSM 23089 / LMG 22485 / NCIMB 9086 / R18194 / 383).